The primary structure comprises 103 residues: UPF0145 protein PERMA_0324 (103 aa).

The protein belongs to the UPF0145 family.

The sequence is that of UPF0145 protein PERMA_0324 from Persephonella marina (strain DSM 14350 / EX-H1).